Reading from the N-terminus, the 334-residue chain is RNA 3'-terminal phosphate cyclase (334 aa).

279 to 282 (HMGD) is a binding site for ATP. The Tele-AMP-histidine intermediate role is filled by histidine 303.

The protein belongs to the RNA 3'-terminal cyclase family. Type 1 subfamily.

It is found in the cytoplasm. It carries out the reaction a 3'-end 3'-phospho-ribonucleotide-RNA + ATP = a 3'-end 2',3'-cyclophospho-ribonucleotide-RNA + AMP + diphosphate. In terms of biological role, catalyzes the conversion of 3'-phosphate to a 2',3'-cyclic phosphodiester at the end of RNA. The mechanism of action of the enzyme occurs in 3 steps: (A) adenylation of the enzyme by ATP; (B) transfer of adenylate to an RNA-N3'P to produce RNA-N3'PP5'A; (C) and attack of the adjacent 2'-hydroxyl on the 3'-phosphorus in the diester linkage to produce the cyclic end product. The biological role of this enzyme is unknown but it is likely to function in some aspects of cellular RNA processing. This is RNA 3'-terminal phosphate cyclase from Metallosphaera sedula (strain ATCC 51363 / DSM 5348 / JCM 9185 / NBRC 15509 / TH2).